A 374-amino-acid chain; its full sequence is Cyclin-D (374 aa).

This sequence belongs to the cyclin family. Cyclin D subfamily.

The sequence is that of Cyclin-D (CycD) from Ostreococcus tauri.